Here is a 144-residue protein sequence, read N- to C-terminus: Superoxide dismutase [Mn], mitochondrial (144 aa).

Histidine 10, histidine 58, and aspartate 143 together coordinate Mn(2+).

The protein belongs to the iron/manganese superoxide dismutase family. Homotetramer. Mn(2+) serves as cofactor.

The protein localises to the mitochondrion matrix. The enzyme catalyses 2 superoxide + 2 H(+) = H2O2 + O2. Functionally, destroys superoxide anion radicals which are normally produced within the cells and which are toxic to biological systems. The sequence is that of Superoxide dismutase [Mn], mitochondrial from Branchiostoma floridae (Florida lancelet).